A 570-amino-acid chain; its full sequence is piRNA biogenesis protein EXD1 (570 aa).

The 3'-5' exonuclease domain maps to 135–307 (YTVIDQFQQK…LPPSLLKILA (173 aa)). 2 stretches are compositionally biased toward basic and acidic residues: residues 433-442 (DEKFLDKESK) and 453-465 (PRKEGEAHKDSKN). The disordered stretch occupies residues 433–485 (DEKFLDKESKQTTAKSQIVPPRKEGEAHKDSKNKPGCWESAGPEDPRAQKAHA).

Belongs to the EXD1 family. In terms of assembly, homodimer. Component of the PET complex, at least composed of EXD1, PIWIL2, TDRD12 and piRNAs.

It localises to the cytoplasm. Functionally, RNA-binding component of the PET complex, a multiprotein complex required for the processing of piRNAs during spermatogenesis. The piRNA metabolic process mediates the repression of transposable elements during meiosis by forming complexes composed of piRNAs and Piwi proteins and governs the methylation and subsequent repression of transposable elements, preventing their mobilization, which is essential for the germline integrity. The PET complex is required during the secondary piRNAs metabolic process for the PIWIL2 slicing-triggered loading of PIWIL4 piRNAs. In the PET complex, EXD1 probably acts as an RNA adapter. EXD1 is an inactive exonuclease. The polypeptide is piRNA biogenesis protein EXD1 (Exd1) (Mus musculus (Mouse)).